A 56-amino-acid chain; its full sequence is Large ribosomal subunit protein bL33 (56 aa).

The protein belongs to the bacterial ribosomal protein bL33 family.

The sequence is that of Large ribosomal subunit protein bL33 from Vibrio vulnificus (strain YJ016).